The chain runs to 414 residues: Argininosuccinate synthase (414 aa).

ATP is bound by residues 15-23 and Ala-42; that span reads AYSGGLDTS. L-citrulline contacts are provided by Tyr-93 and Ser-98. Residue Gly-123 coordinates ATP. Residues Thr-125, Asn-129, and Asp-130 each contribute to the L-aspartate site. Asn-129 provides a ligand contact to L-citrulline. Residues Arg-133, Ser-182, Ser-191, Glu-267, and Tyr-279 each contribute to the L-citrulline site.

This sequence belongs to the argininosuccinate synthase family. Type 1 subfamily. In terms of assembly, homotetramer.

The protein resides in the cytoplasm. The enzyme catalyses L-citrulline + L-aspartate + ATP = 2-(N(omega)-L-arginino)succinate + AMP + diphosphate + H(+). Its pathway is amino-acid biosynthesis; L-arginine biosynthesis; L-arginine from L-ornithine and carbamoyl phosphate: step 2/3. This chain is Argininosuccinate synthase, found in Deinococcus geothermalis (strain DSM 11300 / CIP 105573 / AG-3a).